The sequence spans 396 residues: MKQMAAQKAWTDEERLELAAQLDAELDAFIDGLEKKRYEEGWPEDRWQEEMDKHPFFMKRAPQPGDDVHPMFEGLQKLKYDPEENTRDELALNYKEDGNFYMKHKKFRMAIYSFTEGIKTKTDNPDVLAVLYNNRSAAHFFIKNYRSSLSDAQRALFYKPDYTKARWRSAQCAYELERFDLCTQMCEELLEVDVDNEVAIALLHKNKMKKLEIERNQRKEAAEAKRRLTRFHRLRDAIEQRAIKFDDQKVGKKDVLSEELLYPKFLPLEDHPVHLDEDGSTLIWPAAFSYPEFLYSDFYQQLPETTTMRDCLATLLTEKLPYDKAHNYRLGNVHVYYENRKVGCVHKVDEEKQLAEIIAEKGFFVSGGALLFYVVHKDSRVEQEFINERRRPMVYS.

3 TPR repeats span residues 91-124, 129-162, and 163-196; these read ALNY…KTDN, AVLY…KPDY, and TKAR…DVDN.

Belongs to the TTC4 family. In terms of assembly, forms a complex with Hsp83 and Hsp70aa. Interacts with DNApol-alpha180; the interaction inhibits the activity of the DNA polymerase and occurs only in proliferating cells but not in quiescent cells. As to expression, more abundant in young embryos, pupae and females and a lower level expression seen in late embryos, larvae and males.

It is found in the nucleus. The protein resides in the nucleoplasm. Its subcellular location is the cytoplasm. Functionally, may act as a co-chaperone for HSP83. This chain is DNA polymerase interacting tetratricopeptide repeat-containing, protein of 47 kDa (Dpit47), found in Drosophila melanogaster (Fruit fly).